We begin with the raw amino-acid sequence, 897 residues long: Alanine--tRNA ligase (897 aa).

Zn(2+)-binding residues include His-581, His-585, Cys-684, and His-688.

Belongs to the class-II aminoacyl-tRNA synthetase family. Requires Zn(2+) as cofactor.

The protein localises to the cytoplasm. The catalysed reaction is tRNA(Ala) + L-alanine + ATP = L-alanyl-tRNA(Ala) + AMP + diphosphate. Functionally, catalyzes the attachment of alanine to tRNA(Ala) in a two-step reaction: alanine is first activated by ATP to form Ala-AMP and then transferred to the acceptor end of tRNA(Ala). Also edits incorrectly charged Ser-tRNA(Ala) and Gly-tRNA(Ala) via its editing domain. The polypeptide is Alanine--tRNA ligase (Mycobacterium sp. (strain KMS)).